The chain runs to 247 residues: uncharacterized protein (247 aa).

Helical transmembrane passes span W108–I128, I136–C156, and G194–I214.

It is found in the membrane. This is an uncharacterized protein from Caenorhabditis elegans.